We begin with the raw amino-acid sequence, 345 residues long: 3-isopropylmalate dehydrogenase (345 aa).

76–87 (GPKYDNAPVRPE) lines the NAD(+) pocket. Substrate is bound by residues Arg94, Arg104, Arg132, and Asp216. Mg(2+) is bound by residues Asp216, Asp240, and Asp244. NAD(+) is bound at residue 274–286 (GSAPDIAGQGIAN).

The protein belongs to the isocitrate and isopropylmalate dehydrogenases family. LeuB type 1 subfamily. In terms of assembly, homodimer. The cofactor is Mg(2+). Requires Mn(2+) as cofactor.

The protein resides in the cytoplasm. It carries out the reaction (2R,3S)-3-isopropylmalate + NAD(+) = 4-methyl-2-oxopentanoate + CO2 + NADH. It participates in amino-acid biosynthesis; L-leucine biosynthesis; L-leucine from 3-methyl-2-oxobutanoate: step 3/4. Its function is as follows. Catalyzes the oxidation of 3-carboxy-2-hydroxy-4-methylpentanoate (3-isopropylmalate) to 3-carboxy-4-methyl-2-oxopentanoate. The product decarboxylates to 4-methyl-2 oxopentanoate. In Streptococcus thermophilus (strain CNRZ 1066), this protein is 3-isopropylmalate dehydrogenase.